A 94-amino-acid chain; its full sequence is Integration host factor subunit beta (94 aa).

Belongs to the bacterial histone-like protein family. Heterodimer of an alpha and a beta chain.

In terms of biological role, this protein is one of the two subunits of integration host factor, a specific DNA-binding protein that functions in genetic recombination as well as in transcriptional and translational control. The polypeptide is Integration host factor subunit beta (ihfB) (Serratia marcescens).